The sequence spans 367 residues: 2'-5'-oligoadenylate synthase 1A (367 aa).

The interval 14–61 is interaction with dsRNA; that stretch reads DKFIEDYLLPDTTFGADVKSAVNVVCDFLKERCFQGAAHPVRVSKVVK. Residue Ser64 coordinates ATP. Mg(2+) contacts are provided by Asp76, Asp78, and Asp149. Positions 201–211 are interaction with dsRNA; the sequence is QRPTKLKSLIR. The ATP site is built by Arg211, Lys214, and Gln231. Cys364 carries the S-geranylgeranyl cysteine lipid modification.

It belongs to the 2-5A synthase family. As to quaternary structure, monomer. Homotetramer. Interacts with OAS1D; the interaction inhibits OAS1A catalytic activity. Mg(2+) serves as cofactor. Post-translationally, C-terminal prenylated. As to expression, expressed in oocytes and granulosa cells of ovary, in intestine, stomach, spleen and uterus (at protein level). Expressed at high levels in the digestive tract and lymphoid organs. Expressed in ovary and spleen.

It is found in the cytoplasm. It localises to the mitochondrion. The protein localises to the nucleus. Its subcellular location is the microsome. The protein resides in the endoplasmic reticulum. The catalysed reaction is 3 ATP = 5'-triphosphoadenylyl-(2'-&gt;5')-adenylyl-(2'-&gt;5')-adenosine + 2 diphosphate. Produced as a latent enzyme which is activated by dsRNA generated during the course of viral infection. The dsRNA activator must be at least 15 nucleotides long, and no modification of the 2'-hydroxyl group is tolerated. ssRNA or dsDNA do not act as activators. Functionally, interferon-induced, dsRNA-activated antiviral enzyme which plays a critical role in cellular innate antiviral response. In addition, it may also play a role in other cellular processes such as apoptosis, cell growth, differentiation and gene regulation. Synthesizes higher oligomers of 2'-5'-oligoadenylates (2-5A) from ATP which then bind to the inactive monomeric form of ribonuclease L (RNase L) leading to its dimerization and subsequent activation. Activation of RNase L leads to degradation of cellular as well as viral RNA, resulting in the inhibition of protein synthesis, thus terminating viral replication. Can mediate the antiviral effect via the classical RNase L-dependent pathway or an alternative antiviral pathway independent of RNase L. The protein is 2'-5'-oligoadenylate synthase 1A (Oas1a) of Mus musculus (Mouse).